A 377-amino-acid polypeptide reads, in one-letter code: 3-dehydroquinate synthase (377 aa).

NAD(+) contacts are provided by residues 113-117, 137-138, lysine 150, lysine 159, and 177-180; these read GVIGD, TT, and FLDT. 3 residues coordinate Zn(2+): glutamate 192, histidine 254, and histidine 273.

The protein belongs to the sugar phosphate cyclases superfamily. Dehydroquinate synthase family. It depends on Co(2+) as a cofactor. Zn(2+) serves as cofactor. NAD(+) is required as a cofactor.

The protein localises to the cytoplasm. The catalysed reaction is 7-phospho-2-dehydro-3-deoxy-D-arabino-heptonate = 3-dehydroquinate + phosphate. The protein operates within metabolic intermediate biosynthesis; chorismate biosynthesis; chorismate from D-erythrose 4-phosphate and phosphoenolpyruvate: step 2/7. Catalyzes the conversion of 3-deoxy-D-arabino-heptulosonate 7-phosphate (DAHP) to dehydroquinate (DHQ). This chain is 3-dehydroquinate synthase, found in Bartonella quintana (strain Toulouse) (Rochalimaea quintana).